Consider the following 262-residue polypeptide: Probable DNA polymerase sliding clamp 1 (262 aa).

A DNA-binding region spans residues 67–86 (KCEHTYELGVNVLNMFKLLR).

This sequence belongs to the PCNA family.

Functionally, sliding clamp subunit. Responsible for tethering the catalytic subunit of DNA polymerase to DNA during high-speed replication. The polypeptide is Probable DNA polymerase sliding clamp 1 (Chlorella (PBCV-1)).